The primary structure comprises 224 residues: Protein PLANT CADMIUM RESISTANCE 6 (224 aa).

A helical membrane pass occupies residues 131-151; sequence GMLYGLICCLFAIPCVYTCTF.

The protein belongs to the cornifelin family.

Its subcellular location is the membrane. May be involved in heavy metals transport. This chain is Protein PLANT CADMIUM RESISTANCE 6 (PCR6), found in Arabidopsis thaliana (Mouse-ear cress).